Consider the following 953-residue polypeptide: MSSGLWNQEKVTSPYWEERLFYLLLQECSVTDKQTQKLLRVPKGSIGQYIQDRSVGHSRVPSAKGKKNQIGLKILEQPHAVLFVDEKDVVEINEKFTELLLAITNCEERLSLFRNRIRLSKGLQVDVGSPVRVQLRSGEEKFPGVVRFRGPLLAERTVSGIFFGVELLEEGRGQGFTDGVYQGKQLFQCDEDCGVFVALDKLELIEDDDNGLESDFAGPGDTVQVEPPPLEINSRVSLKVGESTESGTVIFCDVLPGKESLGYFVGVDMDNPIGNWDGRFDGVQLCSFASVESTVLLHINDIIPDSVTQERRPPKLAFMSRGVGDKGSSSHNKPKVTGSTSDPGSRNRSELFYTLNGSSVDSQQQSKSKNPWYIDEVAEDPAKSLTEMSSDFGHSSPPPQPPSMNSLSSENRFHSLPFSLTKMPNTNGSMAHSPLSLSVQSVMGELNSTPVQESPPMPSSSGNAHGLEVGSLAEVKENPPFYGVIRWIGQPPGLSDVLAGLELEDECAGCTDGTFRGTRYFTCALKKALFVKLKSCRPDSRFASLQPVSNQIERCNSLAFGGYLSEVVEENTPPKMEKEGLEIMIGKKKGIQGHYNSCYLDSTLFCLFAFSSALDTVLLRPKEKNDVEYYSETQELLRTEIVNPLRIYGYVCATKIMKLRKILEKVEAASGFTSEEKDPEEFLNILFHDILRVEPLLKIRSAGQKVQDCNFYQIFMEKNEKVGVPTIQQLLEWSFINSNLKFAEAPSCLIIQMPRFGKDFKLFKKIFPSLELNITDLLEDTPRQCRICGGLAMYECRECYDDPDISAGKIKQFCKTCSTQVHLHPRRLNHTYHPVSLPKDLPDWDWRHGCIPCQKMELFAVLCIETSHYVAFVKYGKDDSAWLFFDSMADRDGGQNGFNIPQVTPCPEVGEYLKMSLEDLHSLDSRRIQGCARRLLCDAYMCMYQSPTMSLYK.

Residues 106–590 (CEERLSLFRN…LEIMIGKKKG (485 aa)) are interaction with TRIP. CAP-Gly domains lie at 153–198 (LAER…VFVA) and 253–286 (DVLPGKESLGYFVGVDMDNPIGNWDGRFDGVQLC). Residues 318–350 (FMSRGVGDKGSSSHNKPKVTGSTSDPGSRNRSE) are disordered. Residues 327–346 (GSSSHNKPKVTGSTSDPGSR) show a composition bias toward polar residues. Ser384 is subject to Phosphoserine. The segment at 387 to 410 (EMSSDFGHSSPPPQPPSMNSLSSE) is disordered. The interaction with TRAF2 stretch occupies residues 391–466 (DFGHSSPPPQ…MPSSSGNAHG (76 aa)). Ser415 and Ser419 each carry phosphoserine. The interval 467 to 681 (LEVGSLAEVK…FTSEEKDPEE (215 aa)) is interaction with IKBKG/NEMO. One can recognise a CAP-Gly 3 domain in the interval 489–532 (GQPPGLSDVLAGLELEDECAGCTDGTFRGTRYFTCALKKALFVK). One can recognise a USP domain in the interval 589–947 (KGIQGHYNSC…DAYMCMYQSP (359 aa)). The Nucleophile role is filled by Cys598. A B-box region spans residues 778–830 (LEDTPRQCRICGGLAMYECRECYDDPDISAGKIKQFCKTCSTQVHLHPRRLNH). Positions 785, 788, 796, 799, 814, 817, 822, and 830 each coordinate Zn(2+). The Proton acceptor role is filled by His868.

Belongs to the peptidase C19 family. Interacts (via CAP-Gly domain) with IKBKG/NEMO (via proline-rich C-terminal region). Interacts with TRAF2 and TRIP. Interacts with PLK1, DVL1, DVL3, MAVS, TBK1, IKKE and RIGI. Interacts (via CAP-Gly domain) with microtubules. Interacts with HDAC6 and BCL3. Interacts with MAP3K7. Identified in a complex with TRAF6 and SQSTM1. Interacts with OPTN and SQSTM1. Interacts with CEP350. Interacts with RNF31; the interaction is indirect and is mediated via SPATA2. Interacts with SPATA2 (via the PUB domain); the interaction is direct and recruits CYLD to the LUBAC complex, thereby regulating TNF-alpha-induced necroptosis. Phosphorylated on several serine residues by IKKA and/or IKKB in response to immune stimuli. Phosphorylation requires IKBKG. Phosphorylation abolishes TRAF2 deubiquitination, interferes with the activation of Jun kinases, and strongly reduces CD40-dependent gene activation by NF-kappa-B. In terms of processing, ubiquitinated. Polyubiquitinated in hepatocytes treated with palmitic acid. Ubiquitination is mediated by E3 ligase TRIM47 and leads to proteasomal degradation.

Its subcellular location is the cytoplasm. It is found in the perinuclear region. The protein localises to the cytoskeleton. The protein resides in the cell membrane. It localises to the microtubule organizing center. Its subcellular location is the centrosome. It is found in the spindle. The protein localises to the cilium basal body. It catalyses the reaction Thiol-dependent hydrolysis of ester, thioester, amide, peptide and isopeptide bonds formed by the C-terminal Gly of ubiquitin (a 76-residue protein attached to proteins as an intracellular targeting signal).. In terms of biological role, deubiquitinase that specifically cleaves 'Lys-63'- and linear 'Met-1'-linked polyubiquitin chains and is involved in NF-kappa-B activation and TNF-alpha-induced necroptosis. Negatively regulates NF-kappa-B activation by deubiquitinating upstream signaling factors. Contributes to the regulation of cell survival, proliferation and differentiation via its effects on NF-kappa-B activation. Negative regulator of Wnt signaling. Inhibits HDAC6 and thereby promotes acetylation of alpha-tubulin and stabilization of microtubules. Plays a role in the regulation of microtubule dynamics, and thereby contributes to the regulation of cell proliferation, cell polarization, cell migration, and angiogenesis. Required for normal cell cycle progress and normal cytokinesis. Inhibits nuclear translocation of NF-kappa-B. Plays a role in the regulation of inflammation and the innate immune response, via its effects on NF-kappa-B activation. Dispensable for the maturation of intrathymic natural killer cells, but required for the continued survival of immature natural killer cells. Negatively regulates TNFRSF11A signaling and osteoclastogenesis. Involved in the regulation of ciliogenesis, allowing ciliary basal bodies to migrate and dock to the plasma membrane; this process does not depend on NF-kappa-B activation. Ability to remove linear ('Met-1'-linked) polyubiquitin chains regulates innate immunity and TNF-alpha-induced necroptosis: recruited to the LUBAC complex via interaction with SPATA2 and restricts linear polyubiquitin formation on target proteins. Regulates innate immunity by restricting linear polyubiquitin formation on RIPK2 in response to NOD2 stimulation. Involved in TNF-alpha-induced necroptosis by removing linear ('Met-1'-linked) polyubiquitin chains from RIPK1, thereby regulating the kinase activity of RIPK1. Negatively regulates intestinal inflammation by removing 'Lys-63' linked polyubiquitin chain of NLRP6, thereby reducing the interaction between NLRP6 and PYCARD/ASC and formation of the NLRP6 inflammasome. Does not catalyze deubiquitination of heterotypic 'Lys-63'-/'Lys-48'-linked branched ubiquitin chains. Removes 'Lys-63' linked polyubiquitin chain of MAP3K7, which inhibits phosphorylation and blocks downstream activation of the JNK-p38 kinase cascades. Also removes 'Lys-63'-linked polyubiquitin chains of MAP3K1 and MA3P3K3, which inhibit their interaction with MAP2K1 and MAP2K2. In Rattus norvegicus (Rat), this protein is Ubiquitin carboxyl-terminal hydrolase CYLD (Cyld).